A 716-amino-acid chain; its full sequence is Calpain-1 catalytic subunit (716 aa).

One can recognise a Calpain catalytic domain in the interval 55 to 354 (LFRDEAFPPV…FTRLEICNLT (300 aa)). Gln109 and Asp114 together coordinate Ca(2+). Catalysis depends on residues Cys115, His272, and Asn296. The Ca(2+) site is built by Asp318 and Glu323. Thr354 bears the Phosphothreonine mark. The tract at residues 355–528 (PDALKSQRFR…KSAGTQELDD (174 aa)) is domain III. The interval 529-544 (QVQANLPDEQVLSEEE) is linker. EF-hand domains follow at residues 543 to 578 (EEID…IISK), 587 to 620 (FSLE…NRIR), 617 to 652 (NRIR…AGFK), and 682 to 716 (VRLE…TMFA). Positions 545-715 (IDENFKSLFR…LFKWLQLTMF (171 aa)) are domain IV. Residues Asp600, Asp602, Asn604, Lys606, Glu611, Asp630, Asp632, Ser634, Ser636, and Glu641 each contribute to the Ca(2+) site.

This sequence belongs to the peptidase C2 family. In terms of assembly, forms a heterodimer with a small (regulatory) subunit CAPNS1. Requires Ca(2+) as cofactor. Undergoes calcium-induced successive autoproteolytic cleavages that generate a membrane-bound 78 kDa active form and an intracellular 75 kDa active form. Calpastatin reduces with high efficiency the transition from 78 kDa to 75 kDa calpain forms.

It is found in the cytoplasm. It localises to the cell membrane. The catalysed reaction is Broad endopeptidase specificity.. With respect to regulation, activated by micromolar concentrations of calcium and inhibited by calpastatin. Functionally, calcium-regulated non-lysosomal thiol-protease which catalyzes limited proteolysis of substrates involved in cytoskeletal remodeling and signal transduction. Proteolytically cleaves CTBP1. Cleaves and activates caspase-7 (CASP7). The protein is Calpain-1 catalytic subunit of Bos taurus (Bovine).